The primary structure comprises 134 residues: Small ribosomal subunit protein uS8 (134 aa).

The protein belongs to the universal ribosomal protein uS8 family. As to quaternary structure, part of the 30S ribosomal subunit. Contacts proteins S5 and S12.

Functionally, one of the primary rRNA binding proteins, it binds directly to 16S rRNA central domain where it helps coordinate assembly of the platform of the 30S subunit. The sequence is that of Small ribosomal subunit protein uS8 from Thermotoga maritima (strain ATCC 43589 / DSM 3109 / JCM 10099 / NBRC 100826 / MSB8).